We begin with the raw amino-acid sequence, 368 residues long: tRNA-specific 2-thiouridylase MnmA (368 aa).

Residues 11-18 (GMSGGVDS) and Met-37 contribute to the ATP site. Residues 97-99 (NPD) are interaction with target base in tRNA. Cys-102 acts as the Nucleophile in catalysis. An intrachain disulfide couples Cys-102 to Cys-199. Gly-127 provides a ligand contact to ATP. The tract at residues 149 to 151 (KDQ) is interaction with tRNA. Cys-199 serves as the catalytic Cysteine persulfide intermediate. Residues 311–312 (RY) form an interaction with tRNA region.

It belongs to the MnmA/TRMU family. In terms of assembly, interacts with TusE.

The protein localises to the cytoplasm. The catalysed reaction is S-sulfanyl-L-cysteinyl-[protein] + uridine(34) in tRNA + AH2 + ATP = 2-thiouridine(34) in tRNA + L-cysteinyl-[protein] + A + AMP + diphosphate + H(+). Functionally, catalyzes the 2-thiolation of uridine at the wobble position (U34) of tRNA(Lys), tRNA(Glu) and tRNA(Gln), leading to the formation of s(2)U34, the first step of tRNA-mnm(5)s(2)U34 synthesis. Sulfur is provided by IscS, via a sulfur-relay system. Binds ATP and its substrate tRNAs. The protein is tRNA-specific 2-thiouridylase MnmA of Shigella flexneri serotype 5b (strain 8401).